The primary structure comprises 149 residues: 3-dehydroquinate dehydratase (149 aa).

Y24 (proton acceptor) is an active-site residue. Substrate contacts are provided by N75, H81, and D88. H101 serves as the catalytic Proton donor. Substrate contacts are provided by residues 102-103 and R112; that span reads LS.

This sequence belongs to the type-II 3-dehydroquinase family. In terms of assembly, homododecamer.

It catalyses the reaction 3-dehydroquinate = 3-dehydroshikimate + H2O. The protein operates within metabolic intermediate biosynthesis; chorismate biosynthesis; chorismate from D-erythrose 4-phosphate and phosphoenolpyruvate: step 3/7. Functionally, catalyzes a trans-dehydration via an enolate intermediate. The protein is 3-dehydroquinate dehydratase of Bartonella tribocorum (strain CIP 105476 / IBS 506).